The primary structure comprises 336 residues: Dihydroorotate dehydrogenase (quinone) (336 aa).

Residues 62–66 and Thr86 contribute to the FMN site; that span reads AGLDK. Lys66 provides a ligand contact to substrate. Residue 111–115 participates in substrate binding; sequence NRMGF. Positions 139 and 172 each coordinate FMN. Position 172 (Asn172) interacts with substrate. The active-site Nucleophile is the Ser175. Asn177 is a binding site for substrate. 2 residues coordinate FMN: Lys217 and Thr245. 246–247 is a binding site for substrate; it reads NT. FMN is bound by residues Gly268, Gly297, and 318–319; that span reads YT.

Belongs to the dihydroorotate dehydrogenase family. Type 2 subfamily. As to quaternary structure, monomer. FMN is required as a cofactor.

Its subcellular location is the cell membrane. The catalysed reaction is (S)-dihydroorotate + a quinone = orotate + a quinol. It participates in pyrimidine metabolism; UMP biosynthesis via de novo pathway; orotate from (S)-dihydroorotate (quinone route): step 1/1. Functionally, catalyzes the conversion of dihydroorotate to orotate with quinone as electron acceptor. This is Dihydroorotate dehydrogenase (quinone) from Pseudoalteromonas translucida (strain TAC 125).